The primary structure comprises 44 residues: DNA-directed RNA polymerase subunit Rpo12 (44 aa).

Zn(2+) is bound by residues C8, C22, and C25.

This sequence belongs to the archaeal Rpo12/eukaryotic RPC10 RNA polymerase subunit family. Part of the RNA polymerase complex. Zn(2+) serves as cofactor.

The protein localises to the cytoplasm. It carries out the reaction RNA(n) + a ribonucleoside 5'-triphosphate = RNA(n+1) + diphosphate. DNA-dependent RNA polymerase (RNAP) catalyzes the transcription of DNA into RNA using the four ribonucleoside triphosphates as substrates. The protein is DNA-directed RNA polymerase subunit Rpo12 of Halobacterium salinarum (strain ATCC 29341 / DSM 671 / R1).